We begin with the raw amino-acid sequence, 497 residues long: 3-ketoacyl-CoA synthase 6 (497 aa).

The next 2 membrane-spanning stretches (helical) occupy residues 25–45 (LVNH…AVEL) and 64–84 (LVQV…YFMS). The FAE domain maps to 81-370 (YFMSKPRTIY…FLTSLIGRKI (290 aa)). Residues Cys-225, His-304, His-388, His-392, His-421, and Asn-425 contribute to the active site.

This sequence belongs to the thiolase-like superfamily. Chalcone/stilbene synthases family. As to expression, in epidermal cells of aerial tissues and in the tapetum of anthers near maturity. Expressed in siliques, flowers and leaves.

Its subcellular location is the endoplasmic reticulum membrane. The enzyme catalyses a very-long-chain acyl-CoA + malonyl-CoA + H(+) = a very-long-chain 3-oxoacyl-CoA + CO2 + CoA. It functions in the pathway lipid metabolism; fatty acid biosynthesis. Strongly inhibited by metazachlor and mefluidide. Contributes to cuticular wax and suberin biosynthesis. Involved in both decarbonylation and acyl-reduction wax synthesis pathways. Required for elongation of C24 fatty acids, an essential step of the cuticular wax production. Major condensing enzyme for stem wax and pollen coat lipid biosynthesis. This Arabidopsis thaliana (Mouse-ear cress) protein is 3-ketoacyl-CoA synthase 6.